Reading from the N-terminus, the 249-residue chain is ATP synthase subunit a (249 aa).

6 helical membrane-spanning segments follow: residues 30-50, 84-104, 113-133, 143-163, 196-216, and 221-241; these read SAYM…GSAG, FFPL…VGII, HIIV…IYGF, IFVP…IEVF, LLAG…GMVV, and LELL…CIYL.

The protein belongs to the ATPase A chain family. In terms of assembly, F-type ATPases have 2 components, CF(1) - the catalytic core - and CF(0) - the membrane proton channel. CF(1) has five subunits: alpha(3), beta(3), gamma(1), delta(1), epsilon(1). CF(0) has four main subunits: a, b, b' and c.

It localises to the cell inner membrane. Key component of the proton channel; it plays a direct role in the translocation of protons across the membrane. The chain is ATP synthase subunit a from Rhodopseudomonas palustris (strain BisA53).